A 178-amino-acid polypeptide reads, in one-letter code: Bifunctional protein PyrR (178 aa).

The PRPP-binding motif lies at 99 to 111; sequence VIIVDDVLYTCRT.

It belongs to the purine/pyrimidine phosphoribosyltransferase family. PyrR subfamily. As to quaternary structure, homodimer and homohexamer; in equilibrium.

It catalyses the reaction UMP + diphosphate = 5-phospho-alpha-D-ribose 1-diphosphate + uracil. Regulates transcriptional attenuation of the pyrimidine nucleotide (pyr) operon by binding in a uridine-dependent manner to specific sites on pyr mRNA. This disrupts an antiterminator hairpin in the RNA and favors formation of a downstream transcription terminator, leading to a reduced expression of downstream genes. In terms of biological role, also displays a weak uracil phosphoribosyltransferase activity which is not physiologically significant. The protein is Bifunctional protein PyrR of Clostridium perfringens (strain ATCC 13124 / DSM 756 / JCM 1290 / NCIMB 6125 / NCTC 8237 / Type A).